A 246-amino-acid chain; its full sequence is 1-(5-phosphoribosyl)-5-[(5-phosphoribosylamino)methylideneamino] imidazole-4-carboxamide isomerase (246 aa).

Catalysis depends on aspartate 7, which acts as the Proton acceptor. Catalysis depends on aspartate 130, which acts as the Proton donor.

It belongs to the HisA/HisF family.

It is found in the cytoplasm. The enzyme catalyses 1-(5-phospho-beta-D-ribosyl)-5-[(5-phospho-beta-D-ribosylamino)methylideneamino]imidazole-4-carboxamide = 5-[(5-phospho-1-deoxy-D-ribulos-1-ylimino)methylamino]-1-(5-phospho-beta-D-ribosyl)imidazole-4-carboxamide. It participates in amino-acid biosynthesis; L-histidine biosynthesis; L-histidine from 5-phospho-alpha-D-ribose 1-diphosphate: step 4/9. In Blochmanniella pennsylvanica (strain BPEN), this protein is 1-(5-phosphoribosyl)-5-[(5-phosphoribosylamino)methylideneamino] imidazole-4-carboxamide isomerase.